A 379-amino-acid polypeptide reads, in one-letter code: Dual-specificity RNA methyltransferase RlmN (379 aa).

Residue glutamate 90 is the Proton acceptor of the active site. The region spanning 96–348 is the Radical SAM core domain; it reads EPNRGTLCVS…TTVRKTRGDD (253 aa). The cysteines at positions 103 and 353 are disulfide-linked. 3 residues coordinate [4Fe-4S] cluster: cysteine 110, cysteine 114, and cysteine 117. Residues 179–180, serine 211, 233–235, and asparagine 310 contribute to the S-adenosyl-L-methionine site; these read GE and SLH. Residue cysteine 353 is the S-methylcysteine intermediate of the active site.

The protein belongs to the radical SAM superfamily. RlmN family. [4Fe-4S] cluster serves as cofactor.

It is found in the cytoplasm. It catalyses the reaction adenosine(2503) in 23S rRNA + 2 reduced [2Fe-2S]-[ferredoxin] + 2 S-adenosyl-L-methionine = 2-methyladenosine(2503) in 23S rRNA + 5'-deoxyadenosine + L-methionine + 2 oxidized [2Fe-2S]-[ferredoxin] + S-adenosyl-L-homocysteine. It carries out the reaction adenosine(37) in tRNA + 2 reduced [2Fe-2S]-[ferredoxin] + 2 S-adenosyl-L-methionine = 2-methyladenosine(37) in tRNA + 5'-deoxyadenosine + L-methionine + 2 oxidized [2Fe-2S]-[ferredoxin] + S-adenosyl-L-homocysteine. Specifically methylates position 2 of adenine 2503 in 23S rRNA and position 2 of adenine 37 in tRNAs. m2A2503 modification seems to play a crucial role in the proofreading step occurring at the peptidyl transferase center and thus would serve to optimize ribosomal fidelity. The protein is Dual-specificity RNA methyltransferase RlmN of Nitrosomonas eutropha (strain DSM 101675 / C91 / Nm57).